Here is a 988-residue protein sequence, read N- to C-terminus: MDDLEQAIVISFETGAVDSALKSQAVTYCQQIKETPSICSICIEKLWFSKLVQVQFWCLQTLQDVLRVKYGSMSLDEQSYVRKSVFSMACLEVIDNENAGRVVEGPPFVKNKLAQVLATLIYYEYPLIWSSVFLDFMLHLCKGAVVIDMFCRVLNALDDELISLDYPRTPEEISVAARVKDAMRQQCVPQIARAWYDIVSMYKNSDPDLSATVLDCMRRFVSWIDIGLVANDAFVPLLFELILSDGLSEQVRGAAAGCVLAMVSKRMDPQSKLPLLQTLQISRVFGLVSGDVDSDLVSKVSALLTGYAVEVLECHKRLNSEDTKAVSMDLLNEVLPSVFYVMQKCEVDSTFSIVQFLLGYVSTLKGLPALKEKQLLHITQILEVIRIQICYDPMYRNNLNSLDKTGLEEEDRMSEFRKDLFVLLRTVGRVAPEVTQHFIRNSLANAVESSSESNVEEVEAALSLLYSFGESMTEEAMKTGSGCLSELIPMLLTTQFPGHSHRLVALVYLENITRYMKFIQENSQYIPNVLGAFLDDRGLHHQNFYVSRRAGYLFMRVVKLLKSKLVPFIDKILQNLQDTLSQLTTMNFASRELTGTEDGSHIFEAIGIIIGLEDVPAEKQSDYLSLLLTPLCQQIEAGLVQAKVASSEDFPVKIANIQFAIVAINALSKGFNERLVTASRPGIGLMFKQTLDVLLRVLIEFPKVEPLRSKVTSFIHRMVDTLGSAVFPYLPKALEQLLADSEPKEMVGFMVLLNQLICKFNSALHDILEEVYPVVAVRIFNVIPRDGLPSRPGAVTEEMRELIELQRMLYTFLHVIATHDLSSVFLTPKSRAYLDPMMQLVLNTSCNHKDITVRKACVQIFIKLIKDWCAEPYSEEKVPGFQNFVIEAFATNCCLYSVLDKSFNFSDANTHALFGEIITAQKVMYEKFGNTFLMHLMSKSFPSAHIPQDLAEQYCQKLQGNDIRSLKSYYQSLIENLRLQQNGSHVFR.

It belongs to the exportin family. In terms of tissue distribution, expressed in young leaves, growing leaf blades, young floral organs and root tips.

The protein localises to the nucleus. The protein resides in the cytoplasm. In terms of biological role, probable tRNA nucleus export receptor which regulates tRNA processing and facilitates tRNA translocation across the nuclear pore complex. Is required for proper activity of the shoot apical meristem (SAM) and correct leaf initiation at different developmental stages, and may play a role in floral patterning. The sequence is that of Exportin-T (PSD) from Arabidopsis thaliana (Mouse-ear cress).